We begin with the raw amino-acid sequence, 467 residues long: MDTKHFLPLDFSTQVNSSSLNSPTGRGSMAVPSLHPSLGPGIGSPLGSPGQLHSPISTLSSPINGMGPPFSVISSPMGPHSMSVPTTPTLGFGTGSPQLNSPMNPVSSTEDIKPPLGLNGVLKVPAHPSGNMASFTKHICAICGDRSSGKHYGVYSCEGCKGFFKRTVRKDLTYTCRDNKDCLIDKRQRNRCQYCRYQKCLAMGMKREAVQEERQRGKDRNENEVESTSSANEDMPVEKILEAELAVEPKTETYVEANMGLNPSSPNDPVTNICQAADKQLFTLVEWAKRIPHFSELPLDDQVILLRAGWNELLIASFSHRSIAVKDGILLATGLHVHRNSAHSAGVGAIFDRVLTELVSKMRDMQMDKTELGCLRAIVLFNPDSKGLSNPAEVEALREKVYASLEAYCKHKYPEQPGRFAKLLLRLPALRSIGLKCLEHLFFFKLIGDTPIDTFLMEMLEAPHQAT.

Residues 1–112 (MDTKHFLPLD…MNPVSSTEDI (112 aa)) form a disordered region. The tract at residues 1–139 (MDTKHFLPLD…GNMASFTKHI (139 aa)) is modulating domain. A Glycyl lysine isopeptide (Lys-Gly) (interchain with G-Cter in SUMO2) cross-link involves residue Lys-4. Over residues 11-25 (FSTQVNSSSLNSPTG) the composition is skewed to polar residues. 2 positions are modified to phosphoserine: Ser-22 and Ser-28. Residues 32–52 (PSLHPSLGPGIGSPLGSPGQL) are compositionally biased toward low complexity. Over residues 54 to 63 (SPISTLSSPI) the composition is skewed to polar residues. A phosphoserine; by MAPK8 and MAPK9 mark is found at Ser-61 and Ser-75. Polar residues predominate over residues 83 to 109 (SVPTTPTLGFGTGSPQLNSPMNPVSST). Thr-87 is subject to Phosphothreonine; by MAPK8 and MAPK9. A Glycyl lysine isopeptide (Lys-Gly) (interchain with G-Cter in SUMO) cross-link involves residue Lys-113. At Ser-134 the chain carries Phosphoserine. Residues Cys-140 and Cys-143 each coordinate Zn(2+). The segment at 140 to 160 (CAICGDRSSGKHYGVYSCEGC) adopts an NR C4-type zinc-finger fold. The segment at residues 140-205 (CAICGDRSSG…RYQKCLAMGM (66 aa)) is a DNA-binding region (nuclear receptor). At Lys-150 the chain carries N6-acetyllysine. Zn(2+) contacts are provided by Cys-157 and Cys-160. Residues 165–170 (KRTVRK) form a nuclear localization signal region. 4 residues coordinate Zn(2+): Cys-176, Cys-182, Cys-192, and Cys-195. Residues 176–200 (CRDNKDCLIDKRQRNRCQYCRYQKC) form an NR C4-type zinc finger. Positions 206 to 229 (KREAVQEERQRGKDRNENEVESTS) are hinge. Over residues 211-223 (QEERQRGKDRNEN) the composition is skewed to basic and acidic residues. Residues 211-233 (QEERQRGKDRNENEVESTSSANE) are disordered. One can recognise an NR LBD domain in the interval 232–463 (NEDMPVEKIL…TFLMEMLEAP (232 aa)). Ser-264 bears the Phosphoserine mark. Ser-265 is subject to Phosphoserine; by MAPK8 and MAPK9. Arg-321 and Ala-332 together coordinate 9-cis-retinoate. Residues Arg-321 and Ala-332 each coordinate all-trans-retinoate. The interval 353–373 (RVLTELVSKMRDMQMDKTELG) is required for nuclear export.

Belongs to the nuclear hormone receptor family. NR2 subfamily. In terms of assembly, homodimer. Heterodimer with RARA; required for ligand-dependent retinoic acid receptor transcriptional activity. Heterodimer with PPARA (via the leucine-like zipper in the LBD); the interaction is required for PPARA transcriptional activity. Heterodimerizes with PPARG. Heterodimerizes (via NR LBD) with RARB. Heterodimerizes with NR1H4; the heterodimerization enhances the binding affinity for LXXLL motifs from coactivators. Interacts with coactivator NCO6. Interacts with coactivator NCO3. Interacts with coactivator FAM120B. Interacts with coactivator PELP1, SENP6, SFPQ, DNTTIP2 and RNF8. Interacts with PRMT2. Interacts with ASXL1. Interacts with BHLHE40/DEC1, BHLHE41/DEC2, NCOR1 and NCOR2. Interacts in a ligand-dependent fashion with MED1 and NCOA1. Interacts with VDR. Interacts with EP300; the interaction is decreased by 9-cis retinoic acid. Heterodimer (via C-terminus) with NR4A1 (via DNA-binding domain); the interaction is enhanced by 9-cis retinoic acid. NR4A1 competes with EP300 for interaction with RXRA and thereby attenuates EP300 mediated acetylation of RXRA. In the absence of hormonal ligand, interacts with TACC1. Interacts ith IGFBP3. Post-translationally, acetylated by EP300; acetylation enhances DNA binding and transcriptional activity. Phosphorylated on serine and threonine residues mainly in the N-terminal modulating domain. Constitutively phosphorylated on Ser-22 in the presence or absence of ligand. Under stress conditions, hyperphosphorylated by activated JNK on Ser-61, Ser-75, Thr-87 and Ser-265. Phosphorylated on Ser-28, in vitro, by PKA. This phosphorylation is required for repression of cAMP-mediated transcriptional activity of RARA. In terms of processing, ubiquitinated by UBR5, leading to its degradation: UBR5 specifically recognizes and binds ligand-bound RXRA when it is not associated with coactivators (NCOAs). In presence of NCOAs, the UBR5-degron is not accessible, preventing its ubiquitination and degradation. Post-translationally, sumoylation negatively regulates transcriptional activity. Desumoylated specifically by SENP6. Expressed in macrophages (at protein level).

Its subcellular location is the nucleus. The protein resides in the cytoplasm. It localises to the mitochondrion. In terms of biological role, receptor for retinoic acid that acts as a transcription factor. Forms homo- or heterodimers with retinoic acid receptors (RARs) and binds to target response elements in response to their ligands, all-trans or 9-cis retinoic acid, to regulate gene expression in various biological processes. The RAR/RXR heterodimers bind to the retinoic acid response elements (RARE) composed of tandem 5'-AGGTCA-3' sites known as DR1-DR5 to regulate transcription. The high affinity ligand for retinoid X receptors (RXRs) is 9-cis retinoic acid. In the absence of ligand, the RXR-RAR heterodimers associate with a multiprotein complex containing transcription corepressors that induce histone deacetylation, chromatin condensation and transcriptional suppression. On ligand binding, the corepressors dissociate from the receptors and coactivators are recruited leading to transcriptional activation. Serves as a common heterodimeric partner for a number of nuclear receptors, such as RARA, RARB and PPARA. The RXRA/RARB heterodimer can act as a transcriptional repressor or transcriptional activator, depending on the RARE DNA element context. The RXRA/PPARA heterodimer is required for PPARA transcriptional activity on fatty acid oxidation genes such as ACOX1 and the P450 system genes. Together with RARA, positively regulates microRNA-10a expression, thereby inhibiting the GATA6/VCAM1 signaling response to pulsatile shear stress in vascular endothelial cells. Acts as an enhancer of RARA binding to RARE DNA element. May facilitate the nuclear import of heterodimerization partners such as VDR and NR4A1. Promotes myelin debris phagocytosis and remyelination by macrophages. Plays a role in the attenuation of the innate immune system in response to viral infections, possibly by negatively regulating the transcription of antiviral genes such as type I IFN genes. Involved in the regulation of calcium signaling by repressing ITPR2 gene expression, thereby controlling cellular senescence. In Mus musculus (Mouse), this protein is Retinoic acid receptor RXR-alpha (Rxra).